A 312-amino-acid chain; its full sequence is Acetyl-coenzyme A carboxylase carboxyl transferase subunit alpha (312 aa).

The region spanning 36-286 (RLEKEVKSIY…KEYFLDALRT (251 aa)) is the CoA carboxyltransferase C-terminal domain.

Belongs to the AccA family. Acetyl-CoA carboxylase is a heterohexamer composed of biotin carboxyl carrier protein (AccB), biotin carboxylase (AccC) and two subunits each of ACCase subunit alpha (AccA) and ACCase subunit beta (AccD).

It is found in the cytoplasm. It carries out the reaction N(6)-carboxybiotinyl-L-lysyl-[protein] + acetyl-CoA = N(6)-biotinyl-L-lysyl-[protein] + malonyl-CoA. The protein operates within lipid metabolism; malonyl-CoA biosynthesis; malonyl-CoA from acetyl-CoA: step 1/1. Its function is as follows. Component of the acetyl coenzyme A carboxylase (ACC) complex. First, biotin carboxylase catalyzes the carboxylation of biotin on its carrier protein (BCCP) and then the CO(2) group is transferred by the carboxyltransferase to acetyl-CoA to form malonyl-CoA. The sequence is that of Acetyl-coenzyme A carboxylase carboxyl transferase subunit alpha from Helicobacter pylori (strain P12).